Consider the following 361-residue polypeptide: Histidinol-phosphate aminotransferase (361 aa).

Position 219 is an N6-(pyridoxal phosphate)lysine (Lys219).

This sequence belongs to the class-II pyridoxal-phosphate-dependent aminotransferase family. Histidinol-phosphate aminotransferase subfamily. Homodimer. Pyridoxal 5'-phosphate serves as cofactor.

It carries out the reaction L-histidinol phosphate + 2-oxoglutarate = 3-(imidazol-4-yl)-2-oxopropyl phosphate + L-glutamate. It participates in amino-acid biosynthesis; L-histidine biosynthesis; L-histidine from 5-phospho-alpha-D-ribose 1-diphosphate: step 7/9. In Cereibacter sphaeroides (strain ATCC 17023 / DSM 158 / JCM 6121 / CCUG 31486 / LMG 2827 / NBRC 12203 / NCIMB 8253 / ATH 2.4.1.) (Rhodobacter sphaeroides), this protein is Histidinol-phosphate aminotransferase.